Consider the following 157-residue polypeptide: 2-C-methyl-D-erythritol 2,4-cyclodiphosphate synthase (157 aa).

A divalent metal cation contacts are provided by aspartate 8 and histidine 10. 4-CDP-2-C-methyl-D-erythritol 2-phosphate contacts are provided by residues 8–10 and 34–35; these read DVH and HS. Histidine 42 contacts a divalent metal cation. Residues 56–58, 61–65, 100–106, 132–135, phenylalanine 139, and arginine 142 contribute to the 4-CDP-2-C-methyl-D-erythritol 2-phosphate site; these read DIG, FPDTD, AQAPKMA, and TTSE.

It belongs to the IspF family. In terms of assembly, homotrimer. A divalent metal cation serves as cofactor.

It carries out the reaction 4-CDP-2-C-methyl-D-erythritol 2-phosphate = 2-C-methyl-D-erythritol 2,4-cyclic diphosphate + CMP. Its pathway is isoprenoid biosynthesis; isopentenyl diphosphate biosynthesis via DXP pathway; isopentenyl diphosphate from 1-deoxy-D-xylulose 5-phosphate: step 4/6. In terms of biological role, involved in the biosynthesis of isopentenyl diphosphate (IPP) and dimethylallyl diphosphate (DMAPP), two major building blocks of isoprenoid compounds. Catalyzes the conversion of 4-diphosphocytidyl-2-C-methyl-D-erythritol 2-phosphate (CDP-ME2P) to 2-C-methyl-D-erythritol 2,4-cyclodiphosphate (ME-CPP) with a corresponding release of cytidine 5-monophosphate (CMP). The protein is 2-C-methyl-D-erythritol 2,4-cyclodiphosphate synthase of Photobacterium profundum (strain SS9).